Reading from the N-terminus, the 84-residue chain is Small ribosomal subunit protein bS20 (84 aa).

The protein belongs to the bacterial ribosomal protein bS20 family.

In terms of biological role, binds directly to 16S ribosomal RNA. This Latilactobacillus sakei subsp. sakei (strain 23K) (Lactobacillus sakei subsp. sakei) protein is Small ribosomal subunit protein bS20.